The chain runs to 414 residues: MKFNTVALTLATAGSLVTAQHHHQHRHHQHKREDVVESSATVVQYELDGKPISLKQVCAGLADNTLKFANNDHPTGICDNLSSAAAPASTPEVTSAFAPAQFIELSSVVTSATPTSASSSETVQTPAASSSSASSSSTATGLDADFPDGELDCSTFPSEYGAIPLDYLKLGGWSGIQYVSYAGNFINDIVTAVAGDTCKDGAMCSYACPPGYQKSQWPSTQGATGQSVGGIECRNGKLHLTNPSLSKKLCIPGVGGVHVQNTLGETVAVCRTDYPGTESETIPIGLGGNDLQPLTCPDGETYYKWQGKTTSAQYYVNPKGVTPEKGCQWGDGTQPIGNWAPVNLGVGLNKGKWLSIFQNSPTTSEKLDFNIKIKGDNLSGSCKYENGVFYSETGSSSSGCTVQVMSGDATFVFY.

Residues 1 to 19 (MKFNTVALTLATAGSLVTA) form the signal peptide. Asparagine 80 is a glycosylation site (N-linked (GlcNAc...) asparagine). Positions 115–140 (TSASSSETVQTPAASSSSASSSSTAT) are enriched in low complexity. Residues 115-141 (TSASSSETVQTPAASSSSASSSSTATG) form a disordered region. N-linked (GlcNAc...) asparagine glycosylation is present at asparagine 377.

Belongs to the SUN family. Highly glycosylated.

The protein localises to the secreted. It is found in the cell wall. Functionally, cell surface beta-glucosidase involved in cell wall biosynthesis and septation, and thus required for normal growth and correct hyphal morphogenesis. Has hydrolytic activity on linear (1-&gt;3)-beta-D-glucans such as laminaribiose and other laminarioligosaccharides. Also has a minor transferase activity. This is Secreted beta-glucosidase sun1 (sun1) from Aspergillus fumigatus (strain ATCC MYA-4609 / CBS 101355 / FGSC A1100 / Af293) (Neosartorya fumigata).